Reading from the N-terminus, the 478-residue chain is Probable serine carboxypeptidase CPVL (478 aa).

The N-terminal stretch at 1–22 is a signal peptide; the sequence is MVRAKWKMVVSLILFMVSPGDG. N-linked (GlcNAc...) asparagine glycans are attached at residues asparagine 83 and asparagine 134. Serine 206 is an active-site residue. N-linked (GlcNAc...) asparagine glycosylation is found at asparagine 309 and asparagine 350. Catalysis depends on residues aspartate 390 and histidine 450.

It belongs to the peptidase S10 family.

In terms of biological role, may be involved in the digestion of phagocytosed particles in the lysosome, participation in an inflammatory protease cascade, and trimming of peptides for antigen presentation. In Mus musculus (Mouse), this protein is Probable serine carboxypeptidase CPVL (Cpvl).